A 229-amino-acid chain; its full sequence is uncharacterized protein (229 aa).

Positions 2 to 229 constitute an ABC transporter domain; it reads LTLNNISKSY…LDERGDISHA (228 aa). Residue 38-45 participates in ATP binding; the sequence is GPSGSGKS.

It belongs to the ABC transporter superfamily.

This is an uncharacterized protein from Bacillus subtilis (strain 168).